The primary structure comprises 325 residues: MSKRIYSRIAGTGSYLPEKVLTNDDMSKIVDTSDEWIRSRTGIRERHIVADDQTTSDLAYFASLKAMEAAGVTADEIDLIVVGTTTPDLIFPSTACLLQARLGNVGCGAFDVNAACSGFVYALSVADKFVRSGDAKTVLVVGAETLTRIVDWTDRTTCVLFGDGAGAVVLKADEDTGILSTHLHADGSKKELLWDPVGVSVGFGEGKNGGGALLMKGNDVFKYAVKALDSVVDETLAANGLDTHDLDWLIPHQANLRIIEATAKRLDLPMEQVVVTVDRHGNTSSASVPLALDEAVRSGRVQRGQLLLLEAFGGGFTWGSALLRY.

Active-site residues include cysteine 116 and histidine 252. The segment at 253 to 257 (QANLR) is ACP-binding. Residue asparagine 282 is part of the active site.

Belongs to the thiolase-like superfamily. FabH family. In terms of assembly, homodimer.

The protein resides in the cytoplasm. It carries out the reaction malonyl-[ACP] + acetyl-CoA + H(+) = 3-oxobutanoyl-[ACP] + CO2 + CoA. The protein operates within lipid metabolism; fatty acid biosynthesis. In terms of biological role, catalyzes the condensation reaction of fatty acid synthesis by the addition to an acyl acceptor of two carbons from malonyl-ACP. Catalyzes the first condensation reaction which initiates fatty acid synthesis and may therefore play a role in governing the total rate of fatty acid production. Possesses both acetoacetyl-ACP synthase and acetyl transacylase activities. Its substrate specificity determines the biosynthesis of branched-chain and/or straight-chain of fatty acids. This is Beta-ketoacyl-[acyl-carrier-protein] synthase III from Xanthomonas campestris pv. campestris (strain ATCC 33913 / DSM 3586 / NCPPB 528 / LMG 568 / P 25).